An 83-amino-acid polypeptide reads, in one-letter code: RNA-binding protein Hfq (83 aa).

The 60-residue stretch at Asp9–Val68 folds into the Sm domain.

It belongs to the Hfq family. As to quaternary structure, homohexamer.

In terms of biological role, RNA chaperone that binds small regulatory RNA (sRNAs) and mRNAs to facilitate mRNA translational regulation in response to envelope stress, environmental stress and changes in metabolite concentrations. Also binds with high specificity to tRNAs. This is RNA-binding protein Hfq from Hahella chejuensis (strain KCTC 2396).